Reading from the N-terminus, the 428-residue chain is Arabinosyltransferase RRA2 (428 aa).

The Cytoplasmic segment spans residues 1–15 (MAGRRDRIQQLRGSR). Residues 16-36 (IAIAIFVGILIGCVCSVLFPN) form a helical; Signal-anchor for type II membrane protein membrane-spanning segment. The Lumenal portion of the chain corresponds to 37–428 (GFFNSGSSLI…ALDSFPDGSD (392 aa)). Residues 250–252 (DVD) carry the DXD motif motif. A glycan (N-linked (GlcNAc...) asparagine) is linked at Asn278.

This sequence belongs to the glycosyltransferase 77 family. In terms of tissue distribution, expressed in roots, rosette and cauline leaves, stems, flowers and siliques.

Its subcellular location is the golgi apparatus membrane. In terms of biological role, plays a role in the arabinosylation of cell wall components. Involved in the arabinosylation of extensin proteins in root hair cells. Extensins are structural glycoproteins present in cell walls and its arabinosylation is important for root hair cell development. This is Arabinosyltransferase RRA2 from Arabidopsis thaliana (Mouse-ear cress).